The sequence spans 112 residues: Ferredoxin-2 (112 aa).

2 4Fe-4S ferredoxin-type domains span residues 2 to 30 (TYVV…YEGE) and 31 to 60 (NTLV…PDTE). Positions 9 and 17 each coordinate [3Fe-4S] cluster. Residues Cys21, Cys40, Cys43, and Cys46 each contribute to the [4Fe-4S] cluster site. Residue Cys50 participates in [3Fe-4S] cluster binding. Residues 85-103 (DPMPDHKKYDGETGKREKY) are compositionally biased toward basic and acidic residues. The segment at 85–112 (DPMPDHKKYDGETGKREKYFSPNPGTGD) is disordered.

It depends on [4Fe-4S] cluster as a cofactor. The cofactor is [3Fe-4S] cluster.

Ferredoxins are iron-sulfur proteins that transfer electrons in a wide variety of metabolic reactions. The sequence is that of Ferredoxin-2 (fdxA) from Rhodobacter capsulatus (strain ATCC BAA-309 / NBRC 16581 / SB1003).